We begin with the raw amino-acid sequence, 1057 residues long: Self-sufficient cytochrome P450 monooxygenase CYP505E3 (1057 aa).

Cys-403 provides a ligand contact to heme. The interval Pro-465–Thr-488 is disordered. The region spanning Met-494–Trp-634 is the Flavodoxin-like domain. Residues Ser-500–Thr-504 and Val-578–Val-610 contribute to the FMN site. The region spanning His-671 to Pro-900 is the FAD-binding FR-type domain.

In the N-terminal section; belongs to the cytochrome P450 family. The cofactor is FAD. It depends on FMN as a cofactor. Requires heme as cofactor.

The catalysed reaction is 2 oxidized [cytochrome P450] + NADPH = 2 reduced [cytochrome P450] + NADP(+) + H(+). The enzyme catalyses an organic molecule + reduced [NADPH--hemoprotein reductase] + O2 = an alcohol + oxidized [NADPH--hemoprotein reductase] + H2O + H(+). It carries out the reaction dodecan-1-ol + reduced [NADPH--hemoprotein reductase] + O2 = 1,5-dodecanediol + oxidized [NADPH--hemoprotein reductase] + H2O + H(+). It catalyses the reaction dodecan-1-ol + reduced [NADPH--hemoprotein reductase] + O2 = 1,6-dodecanediol + oxidized [NADPH--hemoprotein reductase] + H2O + H(+). In terms of biological role, self-sufficient cytochrome P450 monooxygenase that catalyzes the regioselective in-chain hydroxylation of fatty alcohols (C9-15) as well as fatty acids (C9-15) at the omega-1 to omega-7 or omega-1 to omega-6 positions, respectively. Is also able to convert naphthalene to 1-naphthol and 1-naphthol further to 1,3-dihydroxynaphthalene. The protein is Self-sufficient cytochrome P450 monooxygenase CYP505E3 of Phanerodontia chrysosporium (White-rot fungus).